Reading from the N-terminus, the 134-residue chain is MAKAVALLLAAIAASAVLVQVECDAPVEKSFNKALLAPVDKRLDEATQAINEAADSVVAAAPPAKKDEVEAATWKRRMFAFAALGMAQGDEKKVAATSLAYKKAAKAVLDAAPADKFKLMDESFKVAAMEVIVS.

An N-terminal signal peptide occupies residues 1-16; it reads MAKAVALLLAAIAASA.

This is an uncharacterized protein from Oryza sativa subsp. indica (Rice).